The chain runs to 578 residues: MLCKFQVFNPIAIELSPHIGNQLLECRGYCKSPALFLKKICPSLKAVAKHPLIILKVYHDADDESRTLSRRQGLSIVRKLVAGFRKAGLKKGDCFAVTSFSDIMYSMVFLGGVAAGRVFSGTNPAYRVAEMRHHIRTTEVKFFIVEPELLDVVIEGATREGIPKDCIFVFNVRGQKVPYGFRSWEWLLQHGEEDWERITDLETLKRTDVARLTTSGTTGLPKTACQSHYNATSFHTVIATKSQASITWEPRTISPLPMFHVATVPAVHASPFRTGHPIWIMRRFKLEPFLAGIEKHQVTNLAVIPPLVTAIINSPLSKKYSLKSVRTAVSGVAPLDAGSQREMRKLLAPGVTFTQLWGLTETTGAMTLFPYPEEDDTGSVGRLIPNTDVKLVDEDGKDITAFDVRGEICVRGPTVVRQYYRNSKANAETWDEDGYLHTGDILYCDSKTKLWYIVDRKKELIKVRGFQVAPPELEAALLQAKDDIADVAVIGLKSQPDSDAERPRAYVVRKPGSDITEAGVKRLIDDHLASYKQLTGGVVFLDEIPRSPTGKILKRVLREWAGTEEKENVTTRRALIPL.

211 to 222 contacts AMP; the sequence is RLTTSGTTGLPK. The tract at residues 472–551 is AMP-binding; that stretch reads ELEAALLQAK…DEIPRSPTGK (80 aa).

It belongs to the ATP-dependent AMP-binding enzyme family.

It participates in mycotoxin biosynthesis. Functionally, acyl-CoA synthetase; part of the gene clusters that mediate the biosynthesis of the host-selective toxins (HSTs) ACT-toxins responsible for brown spot of tangerine disease by the tangerine pathotype which affects tangerines and mandarins. ACT-toxins consist of three moieties, 9,10-epoxy-8-hydroxy-9-methyl-decatrienoic acid (EDA), valine and a polyketide. ACT-toxin I is toxic to both citrus and pear; toxin II the 5''-deoxy derivative of ACT-toxin I, is highly toxic to pear and slightly toxic to citrus. On cellular level, ACT-toxins affect plasma membrane of susceptible cells and cause a sudden increase in loss of K(+) after a few minutes of toxin treatment. The acyl-CoA ligase ACTT1, the hydrolase ACTT2, the enoyl-CoA hydratases ACTT3 and ACTT6, and the acyl-CoA synthetase ACTT5 are all involved in the biosynthesis of the AK-, AF- and ACT-toxin common 9,10-epoxy-8-hydroxy-9-methyl-decatrienoic acid (EDA) structural moiety. The exact role of each enzyme, and of additional enzymes identified within the AF-toxin clusters have still to be determined. On the other hand, ACTTS1 to ACTTS4 are specific to the tangerine pathotype. The function of ACTTS3 is to elongate the polyketide chain portion of ACT-toxin that is unique to this toxin. The enoyl-reductase ACTTS2 might complement the missing enoyl-reductase (ER) domain in ACTTS3 in the synthesis of the polyketide portion of ACT-toxin. The roles of the nonribosomal peptide synthetases-related proteins ACTTS1 and ACTTS4 have also still not been elucidated. In Alternaria alternata (Alternaria rot fungus), this protein is Acyl-CoA synthetase ACTT5.